Consider the following 95-residue polypeptide: DNA-directed RNA polymerase subunit Rpo11 (95 aa).

This sequence belongs to the archaeal Rpo11/eukaryotic RPB11/RPC19 RNA polymerase subunit family. In terms of assembly, part of the RNA polymerase complex.

The protein resides in the cytoplasm. It carries out the reaction RNA(n) + a ribonucleoside 5'-triphosphate = RNA(n+1) + diphosphate. DNA-dependent RNA polymerase (RNAP) catalyzes the transcription of DNA into RNA using the four ribonucleoside triphosphates as substrates. This Pyrococcus furiosus (strain ATCC 43587 / DSM 3638 / JCM 8422 / Vc1) protein is DNA-directed RNA polymerase subunit Rpo11.